We begin with the raw amino-acid sequence, 241 residues long: 2-C-methyl-D-erythritol 4-phosphate cytidylyltransferase (241 aa).

This sequence belongs to the IspD/TarI cytidylyltransferase family. IspD subfamily. As to quaternary structure, homodimer.

It catalyses the reaction 2-C-methyl-D-erythritol 4-phosphate + CTP + H(+) = 4-CDP-2-C-methyl-D-erythritol + diphosphate. It functions in the pathway isoprenoid biosynthesis; isopentenyl diphosphate biosynthesis via DXP pathway; isopentenyl diphosphate from 1-deoxy-D-xylulose 5-phosphate: step 2/6. In terms of biological role, catalyzes the formation of 4-diphosphocytidyl-2-C-methyl-D-erythritol from CTP and 2-C-methyl-D-erythritol 4-phosphate (MEP). This chain is 2-C-methyl-D-erythritol 4-phosphate cytidylyltransferase, found in Yersinia pestis.